Here is a 93-residue protein sequence, read N- to C-terminus: Small ribosomal subunit protein uS19 (93 aa).

It belongs to the universal ribosomal protein uS19 family.

In terms of biological role, protein S19 forms a complex with S13 that binds strongly to the 16S ribosomal RNA. This Symbiobacterium thermophilum (strain DSM 24528 / JCM 14929 / IAM 14863 / T) protein is Small ribosomal subunit protein uS19.